The following is a 420-amino-acid chain: Protein translocase subunit SecY (420 aa).

Helical transmembrane passes span 9–29 (ILIT…PIPG), 61–81 (LSII…MELL), 104–124 (IVRY…SVGL), 141–161 (VFMI…MWIG), 173–193 (ISLI…SGTF), 203–223 (ILML…IIYV), 257–277 (LSGV…STIL), 300–320 (YNIL…SIVF), 355–375 (KLTL…WILV), and 377–397 (AMGV…QVAI).

The protein belongs to the SecY/SEC61-alpha family. Component of the Sec protein translocase complex. Heterotrimer consisting of SecY, SecE and SecG subunits. The heterotrimers can form oligomers, although 1 heterotrimer is thought to be able to translocate proteins. Interacts with the ribosome. Interacts with SecDF, and other proteins may be involved. Interacts with SecA.

Its subcellular location is the cell inner membrane. In terms of biological role, the central subunit of the protein translocation channel SecYEG. Consists of two halves formed by TMs 1-5 and 6-10. These two domains form a lateral gate at the front which open onto the bilayer between TMs 2 and 7, and are clamped together by SecE at the back. The channel is closed by both a pore ring composed of hydrophobic SecY resides and a short helix (helix 2A) on the extracellular side of the membrane which forms a plug. The plug probably moves laterally to allow the channel to open. The ring and the pore may move independently. The protein is Protein translocase subunit SecY of Helicobacter pylori (strain ATCC 700392 / 26695) (Campylobacter pylori).